Reading from the N-terminus, the 565-residue chain is Dihydroxy-acid dehydratase (565 aa).

Residue Cys50 participates in [2Fe-2S] cluster binding. Asp82 serves as a coordination point for Mg(2+). Residue Cys123 coordinates [2Fe-2S] cluster. Asp124 and Lys125 together coordinate Mg(2+). At Lys125 the chain carries N6-carboxylysine. Cys195 is a binding site for [2Fe-2S] cluster. Mg(2+) is bound at residue Glu447. Catalysis depends on Ser473, which acts as the Proton acceptor.

The protein belongs to the IlvD/Edd family. As to quaternary structure, homodimer. The cofactor is [2Fe-2S] cluster. It depends on Mg(2+) as a cofactor.

The catalysed reaction is (2R)-2,3-dihydroxy-3-methylbutanoate = 3-methyl-2-oxobutanoate + H2O. It catalyses the reaction (2R,3R)-2,3-dihydroxy-3-methylpentanoate = (S)-3-methyl-2-oxopentanoate + H2O. It participates in amino-acid biosynthesis; L-isoleucine biosynthesis; L-isoleucine from 2-oxobutanoate: step 3/4. Its pathway is amino-acid biosynthesis; L-valine biosynthesis; L-valine from pyruvate: step 3/4. Functionally, functions in the biosynthesis of branched-chain amino acids. Catalyzes the dehydration of (2R,3R)-2,3-dihydroxy-3-methylpentanoate (2,3-dihydroxy-3-methylvalerate) into 2-oxo-3-methylpentanoate (2-oxo-3-methylvalerate) and of (2R)-2,3-dihydroxy-3-methylbutanoate (2,3-dihydroxyisovalerate) into 2-oxo-3-methylbutanoate (2-oxoisovalerate), the penultimate precursor to L-isoleucine and L-valine, respectively. In Halorhodospira halophila (strain DSM 244 / SL1) (Ectothiorhodospira halophila (strain DSM 244 / SL1)), this protein is Dihydroxy-acid dehydratase.